The sequence spans 317 residues: Methionyl-tRNA formyltransferase (317 aa).

117–120 is a binding site for (6S)-5,6,7,8-tetrahydrofolate; sequence SLLP.

It belongs to the Fmt family.

The catalysed reaction is L-methionyl-tRNA(fMet) + (6R)-10-formyltetrahydrofolate = N-formyl-L-methionyl-tRNA(fMet) + (6S)-5,6,7,8-tetrahydrofolate + H(+). Attaches a formyl group to the free amino group of methionyl-tRNA(fMet). The formyl group appears to play a dual role in the initiator identity of N-formylmethionyl-tRNA by promoting its recognition by IF2 and preventing the misappropriation of this tRNA by the elongation apparatus. The chain is Methionyl-tRNA formyltransferase from Herminiimonas arsenicoxydans.